The chain runs to 198 residues: Thymidine kinase (198 aa).

Residues 9 to 16 (GTMNSGKS) and 85 to 88 (DEAQ) each bind ATP. E86 acts as the Proton acceptor in catalysis. Zn(2+)-binding residues include C143, C146, C180, and H183.

Belongs to the thymidine kinase family. In terms of assembly, homotetramer.

It localises to the cytoplasm. The enzyme catalyses thymidine + ATP = dTMP + ADP + H(+). The chain is Thymidine kinase from Streptococcus thermophilus (strain ATCC BAA-250 / LMG 18311).